Consider the following 2432-residue polypeptide: uncharacterized protein (2432 aa).

Belongs to the IIV-6 261R/396L/443R family.

This is an uncharacterized protein from Invertebrate iridescent virus 6 (IIV-6).